The chain runs to 689 residues: Elongation factor G (689 aa).

A tr-type G domain is found at 9 to 283 (AKFRNIGIMA…AIIEFMPSPL (275 aa)). Residues 18–25 (AHIDAGKT), 82–86 (DTPGH), and 136–139 (NKMD) each bind GTP.

This sequence belongs to the TRAFAC class translation factor GTPase superfamily. Classic translation factor GTPase family. EF-G/EF-2 subfamily.

Its subcellular location is the cytoplasm. Functionally, catalyzes the GTP-dependent ribosomal translocation step during translation elongation. During this step, the ribosome changes from the pre-translocational (PRE) to the post-translocational (POST) state as the newly formed A-site-bound peptidyl-tRNA and P-site-bound deacylated tRNA move to the P and E sites, respectively. Catalyzes the coordinated movement of the two tRNA molecules, the mRNA and conformational changes in the ribosome. This is Elongation factor G from Clostridium botulinum (strain 657 / Type Ba4).